Consider the following 189-residue polypeptide: Signal peptidase complex catalytic subunit sec11 (189 aa).

Over 1–8 the chain is Cytoplasmic; sequence MQKLSFRQ. A helical; Signal-anchor for type II membrane protein membrane pass occupies residues 9–25; sequence GLAQILNLLLVLSSAYM. The Lumenal segment spans residues 26–189; it reads GYKTLSFVTD…LLTLIQKEEQ (164 aa). Catalysis depends on charge relay system residues Ser-47 and His-104. N-linked (GlcNAc...) asparagine glycosylation occurs at Asn-114. The active-site Charge relay system is Asp-129. The tract at residues 173–184 is C-terminal short (CTS) helix; it reads IMLGGLGLLTLI.

It belongs to the peptidase S26B family. As to quaternary structure, component of the signal peptidase complex (SPC) composed of a catalytic subunit sec11 and three accessory subunits spc1, spc2 and spc3. The complex induces a local thinning of the ER membrane which is used to measure the length of the signal peptide (SP) h-region of protein substrates. This ensures the selectivity of the complex towards h-regions shorter than 18-20 amino acids. SPC associates with the translocon complex.

The protein resides in the endoplasmic reticulum membrane. It catalyses the reaction Cleavage of hydrophobic, N-terminal signal or leader sequences from secreted and periplasmic proteins.. Catalytic component of the signal peptidase complex (SPC) which catalyzes the cleavage of N-terminal signal sequences from nascent proteins as they are translocated into the lumen of the endoplasmic reticulum. Specifically cleaves N-terminal signal peptides that contain a hydrophobic alpha-helix (h-region) shorter than 18-20 amino acids. In Schizosaccharomyces pombe (strain 972 / ATCC 24843) (Fission yeast), this protein is Signal peptidase complex catalytic subunit sec11 (sec11).